Consider the following 1326-residue polypeptide: Probable serine/threonine-protein kinase gdt8 (1326 aa).

Residues 1 to 22 (MINKILIKLITIIIFCFSFLFA) form the signal peptide. The Extracellular segment spans residues 23–782 (EEDLIRTPPG…VDRNENLELK (760 aa)). Disordered stretches follow at residues 419–467 (VDQN…GNQG) and 731–762 (EPPT…QTPI). Low complexity-rich tracts occupy residues 422-460 (NNNN…NNNN) and 731-761 (EPPT…TQTP). A helical transmembrane segment spans residues 783–803 (IALPICLSLALLIGIIIMICI). Residues 804–1326 (FKKVQSNSKL…TKEDKDLDEN (523 aa)) are Cytoplasmic-facing. The interval 833-858 (IVSQPPTVIEEKPQDNSKPDDQKLIE) is disordered. The span at 841-858 (IEEKPQDNSKPDDQKLIE) shows a compositional bias: basic and acidic residues. The region spanning 1036-1292 (IKTEQLIASY…FSEISLHLEI (257 aa)) is the Protein kinase domain. Residues 1042 to 1050 (IASYLPSKV) and Lys1065 contribute to the ATP site. Asp1158 serves as the catalytic Proton acceptor. A disordered region spans residues 1301 to 1326 (MNESEESTSNHNTNSKTKEDKDLDEN). Residues 1316–1326 (KTKEDKDLDEN) are compositionally biased toward basic and acidic residues.

This sequence in the N-terminal section; belongs to the GDT family. The protein in the C-terminal section; belongs to the protein kinase superfamily. TKL Ser/Thr protein kinase family.

The protein localises to the membrane. The catalysed reaction is L-seryl-[protein] + ATP = O-phospho-L-seryl-[protein] + ADP + H(+). The enzyme catalyses L-threonyl-[protein] + ATP = O-phospho-L-threonyl-[protein] + ADP + H(+). In Dictyostelium discoideum (Social amoeba), this protein is Probable serine/threonine-protein kinase gdt8 (gdt8).